We begin with the raw amino-acid sequence, 350 residues long: MKTAWTRRSFLQSAALATATVITIAACGGNNQSSSGGSGQPVEVTLVSYAVTQAAYEQIIPKFAAQWKEKTGQEVRFNQSYGGSGSQTRAVIDGLEADVVALALESDINQIEKAGLIQPGWQQRVPNNGIITNSVVALVTQEGNPKGIKDWTDLTKPGVRIVTANPKTSGGARWNFLGAWGSVTQTGGTEEQALQFTTDIYKNVPILAKDARESTDVFTKGQADVLLNYENELILAQQKGEKVDYAIPPVNINIQGPVAVVDTYTDKHGTRKVSEAFVQFLFTPEAQAEFAKVGFRPALPEGVDPQLLAPFPKIQTWFTVADLGGWAKVQPEFFGDGGWFDKVQQAVAGR.

An N-terminal signal peptide occupies residues 1–40; that stretch reads MKTAWTRRSFLQSAALATATVITIAACGGNNQSSSGGSGQ.

The protein belongs to the prokaryotic sulfate-binding protein family.

Its subcellular location is the periplasm. This protein specifically binds sulfate and is involved in its transmembrane transport. This Synechococcus elongatus (strain ATCC 33912 / PCC 7942 / FACHB-805) (Anacystis nidulans R2) protein is Sulfate-binding protein (sbpA).